The sequence spans 119 residues: DNA-binding protein inhibitor ID-3 (119 aa).

One can recognise a bHLH domain in the interval 28–80 (RGKSPAAEEPLSLLDDMNHCYSRLRELVPGVPRGTQLSQVEILQRVIDYILDL).

As to quaternary structure, homodimer, and heterodimer with other HLH proteins. Interacts with COPS5 and COPS7A. Interacts with IFI204. Interacts with GATA4 and NKX2-5. Interacts with ANKRD2; both proteins cooperate in myoblast differentiation. Interacts with CLOCK and BMAL1.

It is found in the nucleus. Its function is as follows. Transcriptional regulator (lacking a basic DNA binding domain) which negatively regulates the basic helix-loop-helix (bHLH) transcription factors by forming heterodimers and inhibiting their DNA binding and transcriptional activity. Implicated in regulating a variety of cellular processes, including cellular growth, senescence, differentiation, apoptosis, angiogenesis, and neoplastic transformation. Involved in myogenesis by inhibiting skeletal muscle and cardiac myocyte differentiation and promoting muscle precursor cells proliferation. Inhibits the binding of E2A-containing protein complexes to muscle creatine kinase E-box enhancer. Regulates the circadian clock by repressing the transcriptional activator activity of the CLOCK-BMAL1 heterodimer. The protein is DNA-binding protein inhibitor ID-3 (ID3) of Bos taurus (Bovine).